We begin with the raw amino-acid sequence, 509 residues long: 2,3-bisphosphoglycerate-independent phosphoglycerate mutase (509 aa).

The Mn(2+) site is built by D12 and S62. The active-site Phosphoserine intermediate is S62. Substrate is bound by residues H123, 153 to 154 (RD), R185, R191, 260 to 263 (RPDR), and K333. The Mn(2+) site is built by D400, H404, D441, H442, and H460.

It belongs to the BPG-independent phosphoglycerate mutase family. In terms of assembly, monomer. Requires Mn(2+) as cofactor.

The catalysed reaction is (2R)-2-phosphoglycerate = (2R)-3-phosphoglycerate. It functions in the pathway carbohydrate degradation; glycolysis; pyruvate from D-glyceraldehyde 3-phosphate: step 3/5. Catalyzes the interconversion of 2-phosphoglycerate and 3-phosphoglycerate. This chain is 2,3-bisphosphoglycerate-independent phosphoglycerate mutase, found in Clostridium botulinum (strain ATCC 19397 / Type A).